The chain runs to 194 residues: Protein phosphatase 1 regulatory subunit 1B (194 aa).

Position 1 is an N-acetylmethionine (Met1). The tract at residues 1–194 is disordered; that stretch reads MDPKDRKKIQ…GEEPQHPSPP (194 aa). Thr34 bears the Phosphothreonine; by PKA mark. The segment covering 41–63 has biased composition (basic and acidic residues); sequence VSEHSSPEEEASPHQRTSGEGHH. A phosphoserine mark is found at Ser45 and Ser46. Residue Thr75 is modified to Phosphothreonine. A compositionally biased stretch (polar residues) spans 84 to 95; it reads HLQTISNLSENQ. Phosphoserine occurs at positions 97 and 130. Residues 113–131 show a composition bias toward acidic residues; sequence QEDDEEDEDEEEDEEEDSQ. Residues 160–170 show a composition bias toward basic and acidic residues; the sequence is PPLDEPQRDGN. Position 192 is a phosphoserine (Ser192).

Belongs to the protein phosphatase inhibitor 1 family. Dopamine- and cyclic AMP-regulated neuronal phosphoprotein. Post-translationally, phosphorylation of Thr-34 is required for activity.

It localises to the cytoplasm. Functionally, inhibitor of protein-phosphatase 1. This chain is Protein phosphatase 1 regulatory subunit 1B (Ppp1r1b), found in Mus musculus (Mouse).